The following is a 446-amino-acid chain: Phosphoglucosamine mutase (446 aa).

The active-site Phosphoserine intermediate is the Ser99. Positions 99, 242, 244, and 246 each coordinate Mg(2+). Ser99 bears the Phosphoserine mark.

The protein belongs to the phosphohexose mutase family. The cofactor is Mg(2+). Post-translationally, activated by phosphorylation.

It carries out the reaction alpha-D-glucosamine 1-phosphate = D-glucosamine 6-phosphate. In terms of biological role, catalyzes the conversion of glucosamine-6-phosphate to glucosamine-1-phosphate. The polypeptide is Phosphoglucosamine mutase (Campylobacter fetus subsp. fetus (strain 82-40)).